Reading from the N-terminus, the 754-residue chain is Probable TonB-dependent siderophore receptor PirA (754 aa).

The N-terminal stretch at 1 to 24 (MSKRIIQSVLSVSVLASMMSMAFA) is a signal peptide. Residues 54–181 (EQVKQSLGVS…AGGVVNIITK (128 aa)) form the TBDR plug domain. In terms of domain architecture, TBDR beta-barrel spans 186–754 (ETHGSVEFYT…AYYASLKYSF (569 aa)). The segment covering 404–414 (VSTTQGKDSSG) has biased composition (polar residues). Residues 404–424 (VSTTQGKDSSGSGYGDQLAKG) are disordered. Cys-511 and Cys-519 form a disulfide bridge. The short motif at 737 to 754 (QTYNEPGRAYYASLKYSF) is the TonB C-terminal box element.

Belongs to the TonB-dependent receptor family.

It is found in the cell outer membrane. Probably involved in the initial step of iron uptake by binding iron chelating siderophores, thereby allowing extraction of iron from the environment. May bind the siderophore, ferric enterobactin, with micromolar affinity. The polypeptide is Probable TonB-dependent siderophore receptor PirA (Acinetobacter baumannii (strain ATCC 19606 / DSM 30007 / JCM 6841 / CCUG 19606 / CIP 70.34 / NBRC 109757 / NCIMB 12457 / NCTC 12156 / 81)).